Here is a 345-residue protein sequence, read N- to C-terminus: Phosphoribosylformylglycinamidine cyclo-ligase (345 aa).

Belongs to the AIR synthase family.

It localises to the cytoplasm. The enzyme catalyses 2-formamido-N(1)-(5-O-phospho-beta-D-ribosyl)acetamidine + ATP = 5-amino-1-(5-phospho-beta-D-ribosyl)imidazole + ADP + phosphate + H(+). Its pathway is purine metabolism; IMP biosynthesis via de novo pathway; 5-amino-1-(5-phospho-D-ribosyl)imidazole from N(2)-formyl-N(1)-(5-phospho-D-ribosyl)glycinamide: step 2/2. In Pseudoalteromonas atlantica (strain T6c / ATCC BAA-1087), this protein is Phosphoribosylformylglycinamidine cyclo-ligase.